Consider the following 494-residue polypeptide: Ubiquitin carboxyl-terminal hydrolase 27 (494 aa).

The helical transmembrane segment at 30–50 (LSFAGLLGVAGFVFAQQHGLF) threads the bilayer. The USP domain occupies 74-494 (PGLQNLGNNC…EASLLFYERL (421 aa)). The active-site Nucleophile is cysteine 83. The active-site Proton acceptor is the histidine 440.

Belongs to the peptidase C19 family.

The protein resides in the membrane. The enzyme catalyses Thiol-dependent hydrolysis of ester, thioester, amide, peptide and isopeptide bonds formed by the C-terminal Gly of ubiquitin (a 76-residue protein attached to proteins as an intracellular targeting signal).. In terms of biological role, recognizes and hydrolyzes the peptide bond at the C-terminal Gly of ubiquitin. Involved in the processing of poly-ubiquitin precursors as well as that of ubiquitinated proteins. The chain is Ubiquitin carboxyl-terminal hydrolase 27 (UBP27) from Arabidopsis thaliana (Mouse-ear cress).